The primary structure comprises 500 residues: Trehalose-6-phosphate synthase (500 aa).

A D-glucose 6-phosphate-binding site is contributed by arginine 28. 48–49 (GG) contributes to the UDP-alpha-D-glucose binding site. Residues tyrosine 104 and aspartate 158 each coordinate D-glucose 6-phosphate. Positions 300 and 305 each coordinate UDP-alpha-D-glucose. Position 338 (arginine 338) interacts with D-glucose 6-phosphate. A UDP-alpha-D-glucose-binding site is contributed by 403–407 (LVAKE).

It belongs to the glycosyltransferase 20 family. Homotetramer.

The enzyme catalyses ADP-alpha-D-glucose + D-glucose 6-phosphate = alpha,alpha-trehalose 6-phosphate + ADP + H(+). It catalyses the reaction CDP-alpha-D-glucose + D-glucose 6-phosphate = alpha,alpha-trehalose 6-phosphate + CDP + H(+). The catalysed reaction is GDP-alpha-D-glucose + D-glucose 6-phosphate = alpha,alpha-trehalose 6-phosphate + GDP + H(+). It carries out the reaction TDP-alpha-D-glucose + D-glucose 6-phosphate = 5-methyl-UDP + alpha,alpha-trehalose 6-phosphate + H(+). The enzyme catalyses D-glucose 6-phosphate + UDP-alpha-D-glucose = alpha,alpha-trehalose 6-phosphate + UDP + H(+). It functions in the pathway glycan biosynthesis; trehalose biosynthesis. Its function is as follows. Probably involved in the osmoprotection via the biosynthesis of trehalose and in the production of glycogen and alpha-glucan via the TreS-Pep2 branch involved in the biosynthesis of maltose-1-phosphate (M1P). Catalyzes the transfer of glucose from UDP-glucose (UDP-Glc) to D-glucose 6-phosphate (Glc-6-P) to form trehalose-6-phosphate. Probably also able to use ADP-Glc, CDP-Glc, GDP-Glc and TDP-Glc as glucosyl donors. The sequence is that of Trehalose-6-phosphate synthase from Mycobacterium ulcerans (strain Agy99).